A 1300-amino-acid polypeptide reads, in one-letter code: Nephrocystin-3 (1300 aa).

Residues 82–183 (KNNEVASMQK…LQRLQAQGIQ (102 aa)) are a coiled coil. TPR repeat units follow at residues 443–476 (TMED…ICEL), 916–949 (ADLY…RETA), 958–991 (AQSL…SENA), 1000–1033 (AREL…RQKS), 1066–1099 (ARTL…RERV), 1108–1141 (AQSI…RRRA), 1150–1183 (AYTV…RQKS), 1192–1225 (ATAL…YEDS), and 1234–1267 (GETL…KETE). Residues 1268 to 1288 (TSVLGAKAPSGHSSSGGDTYS) are disordered. Residues 1278-1288 (GHSSSGGDTYS) are compositionally biased toward polar residues.

The protein resides in the cell projection. It localises to the cilium. Required for normal ciliary development and function. Inhibits disheveled-1-induced canonical Wnt-signaling activity and may also play a role in the control of non-canonical Wnt signaling that regulates planar cell polarity. Probably acts as a molecular switch between different Wnt signaling pathways. Required for proper convergent extension cell movements. The polypeptide is Nephrocystin-3 (nphp3) (Xenopus laevis (African clawed frog)).